The sequence spans 459 residues: Exodeoxyribonuclease 7 large subunit (459 aa).

Belongs to the XseA family. In terms of assembly, heterooligomer composed of large and small subunits.

It is found in the cytoplasm. The enzyme catalyses Exonucleolytic cleavage in either 5'- to 3'- or 3'- to 5'-direction to yield nucleoside 5'-phosphates.. Functionally, bidirectionally degrades single-stranded DNA into large acid-insoluble oligonucleotides, which are then degraded further into small acid-soluble oligonucleotides. The sequence is that of Exodeoxyribonuclease 7 large subunit from Yersinia pseudotuberculosis serotype O:3 (strain YPIII).